Reading from the N-terminus, the 488-residue chain is 3-octaprenyl-4-hydroxybenzoate carboxy-lyase (488 aa).

Mn(2+) is bound at residue N172. Prenylated FMN-binding positions include 175-177 (IYR), 189-191 (RWL), and 194-195 (RG). E238 is a binding site for Mn(2+). The active-site Proton donor is the D287.

It belongs to the UbiD family. As to quaternary structure, homohexamer. The cofactor is prenylated FMN. Requires Mn(2+) as cofactor.

It localises to the cell membrane. The catalysed reaction is a 4-hydroxy-3-(all-trans-polyprenyl)benzoate + H(+) = a 2-(all-trans-polyprenyl)phenol + CO2. It participates in cofactor biosynthesis; ubiquinone biosynthesis. Functionally, catalyzes the decarboxylation of 3-octaprenyl-4-hydroxy benzoate to 2-octaprenylphenol, an intermediate step in ubiquinone biosynthesis. In Alkalilimnicola ehrlichii (strain ATCC BAA-1101 / DSM 17681 / MLHE-1), this protein is 3-octaprenyl-4-hydroxybenzoate carboxy-lyase.